Consider the following 253-residue polypeptide: Small ribosomal subunit protein uS3 (253 aa).

A KH type-2 domain is found at 39–109 (IRNYVLARLK…EVKIDVVEVI (71 aa)). The tract at residues 220–253 (DEMKKMKDRRNDGGAKGRDSRDNRSKRRSRSKRS) is disordered. Basic and acidic residues predominate over residues 221 to 242 (EMKKMKDRRNDGGAKGRDSRDN). A compositionally biased stretch (basic residues) spans 243–253 (RSKRRSRSKRS).

The protein belongs to the universal ribosomal protein uS3 family. As to quaternary structure, part of the 30S ribosomal subunit. Forms a tight complex with proteins S10 and S14.

Functionally, binds the lower part of the 30S subunit head. Binds mRNA in the 70S ribosome, positioning it for translation. In Chlorobium chlorochromatii (strain CaD3), this protein is Small ribosomal subunit protein uS3.